We begin with the raw amino-acid sequence, 490 residues long: Ketol-acid reductoisomerase (NADP(+)) (490 aa).

One can recognise a KARI N-terminal Rossmann domain in the interval 17–208 (LAQCEFMNAD…GGHRAGVLKS (192 aa)). Residues 45 to 48 (CGAQ), Arg68, Arg76, Ser78, and 108 to 110 (DKQ) each bind NADP(+). The active site involves His132. Residue Gly158 coordinates NADP(+). KARI C-terminal knotted domains lie at 209-353 (SFIA…AEQE) and 355-486 (FDNG…MSAM). The Mg(2+) site is built by Asp217, Glu221, Glu389, and Glu393. Ser414 is a substrate binding site.

Belongs to the ketol-acid reductoisomerase family. The cofactor is Mg(2+).

It carries out the reaction (2R)-2,3-dihydroxy-3-methylbutanoate + NADP(+) = (2S)-2-acetolactate + NADPH + H(+). It catalyses the reaction (2R,3R)-2,3-dihydroxy-3-methylpentanoate + NADP(+) = (S)-2-ethyl-2-hydroxy-3-oxobutanoate + NADPH + H(+). It participates in amino-acid biosynthesis; L-isoleucine biosynthesis; L-isoleucine from 2-oxobutanoate: step 2/4. It functions in the pathway amino-acid biosynthesis; L-valine biosynthesis; L-valine from pyruvate: step 2/4. In terms of biological role, involved in the biosynthesis of branched-chain amino acids (BCAA). Catalyzes an alkyl-migration followed by a ketol-acid reduction of (S)-2-acetolactate (S2AL) to yield (R)-2,3-dihydroxy-isovalerate. In the isomerase reaction, S2AL is rearranged via a Mg-dependent methyl migration to produce 3-hydroxy-3-methyl-2-ketobutyrate (HMKB). In the reductase reaction, this 2-ketoacid undergoes a metal-dependent reduction by NADPH to yield (R)-2,3-dihydroxy-isovalerate. This Pseudoalteromonas translucida (strain TAC 125) protein is Ketol-acid reductoisomerase (NADP(+)).